Reading from the N-terminus, the 597-residue chain is DNA mismatch repair protein MutL (597 aa).

Belongs to the DNA mismatch repair MutL/HexB family.

This protein is involved in the repair of mismatches in DNA. It is required for dam-dependent methyl-directed DNA mismatch repair. May act as a 'molecular matchmaker', a protein that promotes the formation of a stable complex between two or more DNA-binding proteins in an ATP-dependent manner without itself being part of a final effector complex. The polypeptide is DNA mismatch repair protein MutL (Rhodopseudomonas palustris (strain HaA2)).